A 1364-amino-acid polypeptide reads, in one-letter code: Toxin subunit YenA2 (1364 aa).

A coiled-coil region spans residues 1025-1080 (SESYRRRRQEWELQYKQAEWEVNSVEQQINLQNMQIKAANKRLEQVEAQQQQAMAL).

As to quaternary structure, semipurified toxin complex consists of at least YenA1-YenA2-YenB-YenC1-YenC2-Chi1-Chi2. The Yen-TC:K9 subcomplex is about 26 nm tall and 22 nm in diameter with 5-fold symmetry and 5 copies of YenA1, YenA2, Chi1 and Chi2; the chitinase subunits may be solvent accessible on the exterior the complex. The Yen-TC:K9 subcomplex has no insecticidal activity. The native complex with additional YenB, YenC1 and YenC2 subunits is 16 nm taller and is insecticidal; the toxicity-conferring subunits are present at about 1 copy each. Post-translationally, the isolated toxin complex includes 3 peptides starting between residues 768 and 778 of this protein, which might be physiologically relevant.

The protein resides in the secreted. In terms of biological role, part of an orally active toxin complex (TC) with strong insecticidal effects on larvae of the Coleoptera Costelytra zealandica, Acrossidius tasmania and Adoryphorus couloni and some Lepidoptera larvae. The TC has an endochitinase activity. In Yersinia entomophaga, this protein is Toxin subunit YenA2.